Reading from the N-terminus, the 446-residue chain is Exodeoxyribonuclease 7 large subunit (446 aa).

Belongs to the XseA family. As to quaternary structure, heterooligomer composed of large and small subunits.

It localises to the cytoplasm. The catalysed reaction is Exonucleolytic cleavage in either 5'- to 3'- or 3'- to 5'-direction to yield nucleoside 5'-phosphates.. In terms of biological role, bidirectionally degrades single-stranded DNA into large acid-insoluble oligonucleotides, which are then degraded further into small acid-soluble oligonucleotides. The protein is Exodeoxyribonuclease 7 large subunit of Streptococcus thermophilus (strain CNRZ 1066).